Reading from the N-terminus, the 92-residue chain is Small ribosomal subunit protein uS19 (92 aa).

This sequence belongs to the universal ribosomal protein uS19 family.

In terms of biological role, protein S19 forms a complex with S13 that binds strongly to the 16S ribosomal RNA. This Yersinia pestis (strain Pestoides F) protein is Small ribosomal subunit protein uS19.